A 159-amino-acid polypeptide reads, in one-letter code: S-ribosylhomocysteine lyase (159 aa).

Fe cation-binding residues include His53, His57, and Cys124.

It belongs to the LuxS family. Homodimer. Fe cation is required as a cofactor.

It carries out the reaction S-(5-deoxy-D-ribos-5-yl)-L-homocysteine = (S)-4,5-dihydroxypentane-2,3-dione + L-homocysteine. Involved in the synthesis of autoinducer 2 (AI-2) which is secreted by bacteria and is used to communicate both the cell density and the metabolic potential of the environment. The regulation of gene expression in response to changes in cell density is called quorum sensing. Catalyzes the transformation of S-ribosylhomocysteine (RHC) to homocysteine (HC) and 4,5-dihydroxy-2,3-pentadione (DPD). In Clostridium beijerinckii (strain ATCC 51743 / NCIMB 8052) (Clostridium acetobutylicum), this protein is S-ribosylhomocysteine lyase.